Consider the following 145-residue polypeptide: Cystatin-like 1 (145 aa).

The N-terminal stretch at 1–19 is a signal peptide; sequence MGIGCWRNPLLLLIALVLS. The Cystatin domain occupies 37 to 115; sequence SKKNMNSTLN…KKLRKSLICE (79 aa). N-linked (GlcNAc...) asparagine glycosylation occurs at asparagine 42. Cystine bridges form between cysteine 91–cysteine 101 and cysteine 114–cysteine 134.

It belongs to the cystatin family.

It is found in the secreted. This is Cystatin-like 1 (CSTL1) from Homo sapiens (Human).